The following is a 35-amino-acid chain: Pheromone-binding protein (35 aa).

The protein belongs to the PBP/GOBP family. In terms of tissue distribution, antenna.

Its function is as follows. This major soluble protein in olfactory sensilla of male moths might serve to solubilize the extremely hydrophobic pheromone molecules and to transport pheromone through the aqueous lymph to receptors located on olfactory cilia. This is Pheromone-binding protein from Hyalophora cecropia (Cecropia moth).